A 594-amino-acid chain; its full sequence is Apolipoprotein N-acyltransferase (594 aa).

The span at 1–29 (MIPAVTDDDPLEDPLDDDVAPGLDDAEPE) shows a compositional bias: acidic residues. The segment at 1–48 (MIPAVTDDDPLEDPLDDDVAPGLDDAEPEPEPRDEHDEPSRPATGSRI) is disordered. Residues 1 to 67 (MIPAVTDDDP…RFGKGVLDRC (67 aa)) lie on the Cytoplasmic side of the membrane. Basic and acidic residues predominate over residues 30–40 (PEPRDEHDEPS). The chain crosses the membrane as a helical span at residues 68–87 (APLSAAIGGGLALWLSFPPI). Topologically, residues 88-116 (GWWFTAFPGLALLGWVLTRTATTKAGGFG) are extracellular. A helical membrane pass occupies residues 117–134 (YGVLFGLAFYVPLLPWIS). Topologically, residues 135–138 (GLVG) are cytoplasmic. The helical transmembrane segment at 139–160 (AVPWLALAFAESLFCGLFGLGA) threads the bilayer. The Extracellular portion of the chain corresponds to 161–221 (VVVVRLPGWP…IGGAPLVSFA (61 aa)). Residues 222-239 (VALIGFSLTLLTAQIVWW) form a helical membrane-spanning segment. The Cytoplasmic segment spans residues 240 to 251 (WRHGHKPGVPAP). The helical transmembrane segment at 252-269 (AVMLPGVAIAASLLVTAL) threads the bilayer. Over 270–554 (VWPQVRQSGT…TDLTPATKWG (285 aa)) the chain is Extracellular. Positions 287 to 543 (VTVAAVQGNV…PAYLDNQIRL (257 aa)) constitute a CN hydrolase domain. Glutamate 340 (proton acceptor) is an active-site residue. Residue lysine 405 is part of the active site. Cysteine 455 acts as the Nucleophile in catalysis. The chain crosses the membrane as a helical span at residues 555–572 (PIVQAVLVIAGVAVLLIA). Residues 573-594 (ILHNGRFAPRMLRRRSATTVKR) are Cytoplasmic-facing.

Belongs to the CN hydrolase family. Apolipoprotein N-acyltransferase subfamily. As to quaternary structure, interacts with Ppm1 (AC A0QZ12) upon coexpression in E.coli, which increases the PPM synthase activity of Ppm1.

Its subcellular location is the cell membrane. The catalysed reaction is N-terminal S-1,2-diacyl-sn-glyceryl-L-cysteinyl-[lipoprotein] + a glycerophospholipid = N-acyl-S-1,2-diacyl-sn-glyceryl-L-cysteinyl-[lipoprotein] + a 2-acyl-sn-glycero-3-phospholipid + H(+). It participates in protein modification; lipoprotein biosynthesis (N-acyl transfer). Its function is as follows. Catalyzes the phospholipid dependent N-acylation of the N-terminal cysteine of apolipoprotein, the last step in lipoprotein maturation. Can transfer a number of fatty acids (C16 and C19, palmitic and probably tuberculostearic acids respectively are shown). Enhances the polyprenol monophosphomannose (PPM) synthase activity of Ppm1 (AC A0QZ12) without itself having PPM synthase catalytic activity. In Mycolicibacterium smegmatis (strain ATCC 700084 / mc(2)155) (Mycobacterium smegmatis), this protein is Apolipoprotein N-acyltransferase.